A 157-amino-acid chain; its full sequence is Protein Smg homolog (157 aa).

It belongs to the Smg family.

In Xanthomonas campestris pv. campestris (strain 8004), this protein is Protein Smg homolog.